Consider the following 106-residue polypeptide: Putative membrane protein insertion efficiency factor (106 aa).

It belongs to the UPF0161 family.

It is found in the cell inner membrane. Functionally, could be involved in insertion of integral membrane proteins into the membrane. The polypeptide is Putative membrane protein insertion efficiency factor (Methylacidiphilum infernorum (isolate V4) (Methylokorus infernorum (strain V4))).